A 262-amino-acid chain; its full sequence is Probable proteasome subunit beta type-7 (262 aa).

The protein belongs to the peptidase T1B family. As to quaternary structure, the 26S proteasome consists of a 20S proteasome core and two 19S regulatory subunits. The 20S proteasome core is composed of 28 subunits that are arranged in four stacked rings, resulting in a barrel-shaped structure. The two end rings are each formed by seven alpha subunits, and the two central rings are each formed by seven beta subunits. The catalytic chamber with the active sites is on the inside of the barrel.

It localises to the cytoplasm. The protein resides in the nucleus. Functionally, non-catalytic component of the proteasome, a multicatalytic proteinase complex which is characterized by its ability to cleave peptides with Arg, Phe, Tyr, Leu, and Glu adjacent to the leaving group at neutral or slightly basic pH. The proteasome has an ATP-dependent proteolytic activity. The protein is Probable proteasome subunit beta type-7 of Schizosaccharomyces pombe (strain 972 / ATCC 24843) (Fission yeast).